We begin with the raw amino-acid sequence, 187 residues long: Adenylate kinase (187 aa).

11–16 provides a ligand contact to ATP; sequence GAGKGT. The interval 31–60 is NMP; sequence STGDILREAVKNQTAMGIEAKRYMDAGDLV. Residues threonine 32, arginine 37, 58–60, 86–89, and glutamine 93 contribute to the AMP site; these read DLV and GFPR. Positions 127–137 are LID; it reads GRAEIEGRADD. Arginine 128 contacts ATP. AMP contacts are provided by arginine 134 and arginine 145. Glycine 173 is a binding site for ATP.

The protein belongs to the adenylate kinase family. As to quaternary structure, monomer.

Its subcellular location is the cytoplasm. It catalyses the reaction AMP + ATP = 2 ADP. It participates in purine metabolism; AMP biosynthesis via salvage pathway; AMP from ADP: step 1/1. In terms of biological role, catalyzes the reversible transfer of the terminal phosphate group between ATP and AMP. Plays an important role in cellular energy homeostasis and in adenine nucleotide metabolism. This chain is Adenylate kinase, found in Leptospira interrogans serogroup Icterohaemorrhagiae serovar copenhageni (strain Fiocruz L1-130).